A 458-amino-acid chain; its full sequence is Sugar transporter ERD6-like 10 (458 aa).

The next 12 membrane-spanning stretches (helical) occupy residues 17 to 37 (ITACVILSTFVAVCSSFSYGC), 66 to 86 (FLNLGGAVGALFSGQLAVILG), 96 to 116 (LFCIFGWLSIAFAKNVLWLDL), 119 to 139 (ISLGIGVGLTSYVVPVYIAEI), 150 to 170 (ASTLLLQNSGISLIYFFGTVI), 174 to 194 (VLAVIGALPCFIPVIGIYFIP), 257 to 277 (LVVGIGLMLIQQLSGASGITY), 292 to 312 (LGSMIFGVFVIPKALVGLILV), 319 to 339 (PLLLASAVGMSIGSLLIGVSF), 350 to 370 (FIPVFVFINILVYFGFFAIGI), 393 to 413 (IVALTSWTTGWFVSYGFNFMF), and 419 to 439 (GTFYIFAMVGGLSLLFIWMLV).

Belongs to the major facilitator superfamily. Sugar transporter (TC 2.A.1.1) family.

The protein resides in the membrane. Its function is as follows. Sugar transporter. The sequence is that of Sugar transporter ERD6-like 10 from Arabidopsis thaliana (Mouse-ear cress).